The sequence spans 544 residues: Protein nucleotidyltransferase YdiU (544 aa).

G133, G135, R136, K155, D167, G168, R218, and R225 together coordinate ATP. The active-site Proton acceptor is the D294. Mg(2+) is bound by residues N295 and D304. Position 304 (D304) interacts with ATP.

The protein belongs to the SELO family. Mg(2+) is required as a cofactor. The cofactor is Mn(2+).

It catalyses the reaction L-seryl-[protein] + ATP = 3-O-(5'-adenylyl)-L-seryl-[protein] + diphosphate. The catalysed reaction is L-threonyl-[protein] + ATP = 3-O-(5'-adenylyl)-L-threonyl-[protein] + diphosphate. The enzyme catalyses L-tyrosyl-[protein] + ATP = O-(5'-adenylyl)-L-tyrosyl-[protein] + diphosphate. It carries out the reaction L-histidyl-[protein] + UTP = N(tele)-(5'-uridylyl)-L-histidyl-[protein] + diphosphate. It catalyses the reaction L-seryl-[protein] + UTP = O-(5'-uridylyl)-L-seryl-[protein] + diphosphate. The catalysed reaction is L-tyrosyl-[protein] + UTP = O-(5'-uridylyl)-L-tyrosyl-[protein] + diphosphate. Functionally, nucleotidyltransferase involved in the post-translational modification of proteins. It can catalyze the addition of adenosine monophosphate (AMP) or uridine monophosphate (UMP) to a protein, resulting in modifications known as AMPylation and UMPylation. This Cupriavidus metallidurans (strain ATCC 43123 / DSM 2839 / NBRC 102507 / CH34) (Ralstonia metallidurans) protein is Protein nucleotidyltransferase YdiU.